Reading from the N-terminus, the 344-residue chain is MEARLKELKQKALELIEEAKELKGLNDVRVAYLGKKGPITEVLRGMGKLSAEERPRMGALVNEVREAIQTRLDDKISNLEKAVIEAKLATETIDVTLPGRPVETGCHHPLTAVVEQIEDVFIGMGYEVAEGTEVEKDYYNFEALNLPKDHPARDMQDTFYITEETLLRTHTSSVQARTMENNKEKGPIKIICPGKVYRRDDDDATHSHQFMQIEGLVIDKNIRMSDLKGTLQVFVKKMFGEDREIRLRPSFFPFTEPSVEMDISCMMCHGKGCGTCKGTGWIEILGAGMVHPNVLEMAGYDSKEYQGFAFGMGAERIAMLKYGVDDIRHFYTNDVRFLQQFKRA.

Glu-256 contacts Mg(2+).

Belongs to the class-II aminoacyl-tRNA synthetase family. Phe-tRNA synthetase alpha subunit type 1 subfamily. Tetramer of two alpha and two beta subunits. It depends on Mg(2+) as a cofactor.

The protein resides in the cytoplasm. It carries out the reaction tRNA(Phe) + L-phenylalanine + ATP = L-phenylalanyl-tRNA(Phe) + AMP + diphosphate + H(+). The protein is Phenylalanine--tRNA ligase alpha subunit of Bacillus anthracis (strain CDC 684 / NRRL 3495).